A 59-amino-acid polypeptide reads, in one-letter code: Protein ORF5a (59 aa).

A helical; Signal-anchor for type III membrane protein membrane pass occupies residues 13-33 (VIYDCIAILALGCAITCLLLI).

The protein localises to the membrane. The sequence is that of Protein ORF5a (GP5) from Equine arteritis virus (strain Bucyrus) (EAV).